Reading from the N-terminus, the 363-residue chain is Phospho-N-acetylmuramoyl-pentapeptide-transferase (363 aa).

Transmembrane regions (helical) follow at residues 33–53 (YAVLMGIALYAGFFFTYGVLP), 82–102 (GVIFVSVFVLLVYLLMRPSFV), 105–125 (LILLLTWGVMLTGYLDDCAQV), 133–153 (GALDFLFAVLTAALLGHFYFH), 166–186 (PVFVSPFLFFAGSVVILWMSI), 198–218 (LSGALVLMALLSMGTIFYFLL), 227–247 (LLVPFVVDGAQWALMSFALAG), 271–291 (ALGFFIGVLVLISGNPFLLLM), 295–315 (VILVNGGTGLLKVVLLRFFHV), and 340–360 (VLLRFMILQGLLTIGLLGVLF).

It belongs to the glycosyltransferase 4 family. MraY subfamily. It depends on Mg(2+) as a cofactor.

It localises to the cell inner membrane. It carries out the reaction UDP-N-acetyl-alpha-D-muramoyl-L-alanyl-gamma-D-glutamyl-meso-2,6-diaminopimeloyl-D-alanyl-D-alanine + di-trans,octa-cis-undecaprenyl phosphate = di-trans,octa-cis-undecaprenyl diphospho-N-acetyl-alpha-D-muramoyl-L-alanyl-D-glutamyl-meso-2,6-diaminopimeloyl-D-alanyl-D-alanine + UMP. It participates in cell wall biogenesis; peptidoglycan biosynthesis. In terms of biological role, catalyzes the initial step of the lipid cycle reactions in the biosynthesis of the cell wall peptidoglycan: transfers peptidoglycan precursor phospho-MurNAc-pentapeptide from UDP-MurNAc-pentapeptide onto the lipid carrier undecaprenyl phosphate, yielding undecaprenyl-pyrophosphoryl-MurNAc-pentapeptide, known as lipid I. The protein is Phospho-N-acetylmuramoyl-pentapeptide-transferase of Treponema pallidum (strain Nichols).